A 117-amino-acid polypeptide reads, in one-letter code: Type II secretion system protein I (117 aa).

Positions 1–6 (MKSKRG) are cleaved as a propeptide — leader sequence. An N-methylphenylalanine modification is found at F7. A helical transmembrane segment spans residues 7 to 27 (FTLLEVLVALAIFATAAISVI).

The protein belongs to the GSP I family. Type II secretion is composed of four main components: the outer membrane complex, the inner membrane complex, the cytoplasmic secretion ATPase and the periplasm-spanning pseudopilus. Interacts with core component EpsG. Post-translationally, cleaved by prepilin peptidase. In terms of processing, methylated by prepilin peptidase at the amino group of the N-terminal phenylalanine once the leader sequence is cleaved by prepilin peptidase.

The protein localises to the cell inner membrane. In terms of biological role, component of the type II secretion system required for the energy-dependent secretion of extracellular factors such as proteases and toxins from the periplasm. Part of the pseudopilus tip complex that is critical for the recognition and binding of secretion substrates. This is Type II secretion system protein I (epsI) from Vibrio cholerae serotype O1 (strain ATCC 39315 / El Tor Inaba N16961).